The sequence spans 86 residues: Muscarinic toxin 2 (86 aa).

The signal sequence occupies residues 1 to 21; the sequence is MKTLLLTLVVVTIVCLDLGYT. Cystine bridges form between Cys-24/Cys-45, Cys-38/Cys-63, Cys-67/Cys-78, and Cys-79/Cys-84.

This sequence belongs to the three-finger toxin family. Short-chain subfamily. Aminergic toxin sub-subfamily. As to quaternary structure, monomer. As to expression, expressed by the venom gland.

The protein localises to the secreted. Binds irreversibly to M1 (CHRM1) muscarinic acetylcholine receptors, and reveals a slightly weaker effect on M3 (CHRM3) receptors. The mechanism of toxin-receptor interaction comprises at least two steps. The first step is fast with no competition between the toxin and the antagonist. The second step is slow with formation of a more stable toxin-receptor complex and inhibition of the antagonist binding. The sequence is that of Muscarinic toxin 2 from Dendroaspis angusticeps (Eastern green mamba).